The sequence spans 441 residues: Glutamyl-tRNA reductase (441 aa).

Residues 49–52, Ser109, 114–116, and Gln120 contribute to the substrate site; these read TCNR and EDQ. Cys50 (nucleophile) is an active-site residue. 190–195 is an NADP(+) binding site; that stretch reads GAGKMS.

Belongs to the glutamyl-tRNA reductase family. As to quaternary structure, homodimer.

The catalysed reaction is (S)-4-amino-5-oxopentanoate + tRNA(Glu) + NADP(+) = L-glutamyl-tRNA(Glu) + NADPH + H(+). It functions in the pathway porphyrin-containing compound metabolism; protoporphyrin-IX biosynthesis; 5-aminolevulinate from L-glutamyl-tRNA(Glu): step 1/2. In terms of biological role, catalyzes the NADPH-dependent reduction of glutamyl-tRNA(Glu) to glutamate 1-semialdehyde (GSA). The protein is Glutamyl-tRNA reductase of Moorella thermoacetica (strain ATCC 39073 / JCM 9320).